A 710-amino-acid chain; its full sequence is Denticleless protein homolog A (710 aa).

WD repeat units follow at residues 47–89, 96–135, and 138–178; these read GMPV…MQRL, AHTN…LIGE, and GHQC…KDGF. The short motif at 168–171 is the DDB1-binding motif element; the sequence is WDTR. Positions 197 to 204 match the Nuclear localization signal motif; the sequence is PSKMKKRK. WD repeat units lie at residues 215-254, 270-309, 314-355, and 359-398; these read DSQQ…SAYR, TRKL…TDPV, GHQN…AAPV, and GHCQ…CEDS. Residues 244 to 247 carry the DDB1-binding motif motif; it reads WDLR. Disordered regions lie at residues 428-534 and 652-698; these read GKPS…VSSA and ALGH…PGSM. Residues 430–450 are compositionally biased toward low complexity; that stretch reads PSVMSSSSLTSSPTPASCAPS. Composition is skewed to polar residues over residues 504–516 and 659–690; these read TPKS…TKTP and SSPQ…SPVS.

The protein belongs to the WD repeat cdt2 family. In terms of assembly, component of the DCX(DTL) E3 ubiquitin ligase complex, at least composed of cul4 (cul4a or cul4b), ddb1, dtl/cdt2 and rbx1.

It localises to the nucleus. The protein localises to the cytoplasm. It is found in the cytoskeleton. The protein resides in the microtubule organizing center. Its subcellular location is the centrosome. It localises to the chromosome. It functions in the pathway protein modification; protein ubiquitination. Substrate-specific adapter of a DCX (DDB1-CUL4-X-box) E3 ubiquitin-protein ligase complex required for cell cycle control, DNA damage response and translesion DNA synthesis. The DCX(DTL) complex, also named CRL4(CDT2) complex, mediates the polyubiquitination and subsequent degradation of CDT1, CDKN1A/p21(CIP1), KMT5A and SDE2. CDT1 degradation in response to DNA damage is necessary to ensure proper cell cycle regulation of DNA replication. CDKN1A/p21(CIP1) degradation during S phase or following UV irradiation is essential to control replication licensing. KMT5A degradation is also important for a proper regulation of mechanisms such as TGF-beta signaling, cell cycle progression, DNA repair and cell migration. Most substrates require their interaction with PCNA for their polyubiquitination: substrates interact with PCNA via their PIP-box, and those containing the 'K+4' motif in the PIP box, recruit the DCX(DTL) complex, leading to their degradation. In undamaged proliferating cells, the DCX(DTL) complex also promotes the 'Lys-164' monoubiquitination of PCNA, thereby being involved in PCNA-dependent translesion DNA synthesis. May play a role in the regulation of the circadian clock. The sequence is that of Denticleless protein homolog A (dtl-a) from Xenopus laevis (African clawed frog).